The chain runs to 474 residues: tRNA-2-methylthio-N(6)-dimethylallyladenosine synthase (474 aa).

An MTTase N-terminal domain is found at 3 to 120 (KKLHIKTWGC…LPEMINSVRG (118 aa)). Residues C12, C49, C83, C157, C161, and C164 each contribute to the [4Fe-4S] cluster site. The region spanning 143-375 (RAEGPTAFVS…QERINQQAMA (233 aa)) is the Radical SAM core domain. One can recognise a TRAM domain in the interval 378–441 (RRMLGTTQRI…PNSLRGKVVR (64 aa)).

It belongs to the methylthiotransferase family. MiaB subfamily. In terms of assembly, monomer. Requires [4Fe-4S] cluster as cofactor.

It is found in the cytoplasm. The catalysed reaction is N(6)-dimethylallyladenosine(37) in tRNA + (sulfur carrier)-SH + AH2 + 2 S-adenosyl-L-methionine = 2-methylsulfanyl-N(6)-dimethylallyladenosine(37) in tRNA + (sulfur carrier)-H + 5'-deoxyadenosine + L-methionine + A + S-adenosyl-L-homocysteine + 2 H(+). In terms of biological role, catalyzes the methylthiolation of N6-(dimethylallyl)adenosine (i(6)A), leading to the formation of 2-methylthio-N6-(dimethylallyl)adenosine (ms(2)i(6)A) at position 37 in tRNAs that read codons beginning with uridine. The chain is tRNA-2-methylthio-N(6)-dimethylallyladenosine synthase from Escherichia coli (strain SE11).